We begin with the raw amino-acid sequence, 378 residues long: Ribosomal RNA large subunit methyltransferase G (378 aa).

It belongs to the methyltransferase superfamily. RlmG family.

The protein resides in the cytoplasm. It carries out the reaction guanosine(1835) in 23S rRNA + S-adenosyl-L-methionine = N(2)-methylguanosine(1835) in 23S rRNA + S-adenosyl-L-homocysteine + H(+). Functionally, specifically methylates the guanine in position 1835 (m2G1835) of 23S rRNA. The sequence is that of Ribosomal RNA large subunit methyltransferase G from Escherichia coli (strain ATCC 8739 / DSM 1576 / NBRC 3972 / NCIMB 8545 / WDCM 00012 / Crooks).